We begin with the raw amino-acid sequence, 119 residues long: Immunoglobulin heavy variable 2-70 (119 aa).

The signal sequence occupies residues 1–19 (MDILCSTLLLLTVPSWVLS). Glutamine 20 is subject to Pyrrolidone carboxylic acid. The framework-1 stretch occupies residues 20–44 (QVTLRESGPALVKPTQTLTLTCTFS). Positions 20-119 (QVTLRESGPA…DTATYYCARI (100 aa)) constitute an Ig-like domain. Cysteine 41 and cysteine 116 are oxidised to a cystine. The segment at 45 to 54 (GFSLSTSGMC) is complementarity-determining-1. A framework-2 region spans residues 55 to 71 (VSWIRQPPGKALEWLAL). A complementarity-determining-2 region spans residues 72-78 (IDWDDDK). The tract at residues 79-116 (YYSTSLKTRLTISKDTSKNQVVLTMTNMDPVDTATYYC) is framework-3. The tract at residues 117–119 (ARI) is complementarity-determining-3.

As to quaternary structure, immunoglobulins are composed of two identical heavy chains and two identical light chains; disulfide-linked.

Its subcellular location is the secreted. It localises to the cell membrane. V region of the variable domain of immunoglobulin heavy chains that participates in the antigen recognition. Immunoglobulins, also known as antibodies, are membrane-bound or secreted glycoproteins produced by B lymphocytes. In the recognition phase of humoral immunity, the membrane-bound immunoglobulins serve as receptors which, upon binding of a specific antigen, trigger the clonal expansion and differentiation of B lymphocytes into immunoglobulins-secreting plasma cells. Secreted immunoglobulins mediate the effector phase of humoral immunity, which results in the elimination of bound antigens. The antigen binding site is formed by the variable domain of one heavy chain, together with that of its associated light chain. Thus, each immunoglobulin has two antigen binding sites with remarkable affinity for a particular antigen. The variable domains are assembled by a process called V-(D)-J rearrangement and can then be subjected to somatic hypermutations which, after exposure to antigen and selection, allow affinity maturation for a particular antigen. In Homo sapiens (Human), this protein is Immunoglobulin heavy variable 2-70.